The following is a 128-amino-acid chain: Lymphocyte antigen 6 complex locus protein G5c (128 aa).

An N-terminal signal peptide occupies residues 1–29 (MGAEYGCLPSTSQALYVILLIVLVRMSLV). One can recognise a UPAR/Ly6 domain in the interval 37–128 (LRCYRCLLET…NPQNRVFYIP (92 aa)). 5 disulfide bridges follow: Cys-39–Cys-66, Cys-42–Cys-51, Cys-58–Cys-85, Cys-94–Cys-111, and Cys-112–Cys-117. Asn-73 carries N-linked (GlcNAc...) asparagine glycosylation.

As to quaternary structure, forms oligomers. In terms of processing, N-glycosylated. Abundantly expressed in the epididymis.

It is found in the secreted. Its function is as follows. May have a role in hematopoietic cell differentiation. The protein is Lymphocyte antigen 6 complex locus protein G5c (LY6G5C) of Canis lupus familiaris (Dog).